We begin with the raw amino-acid sequence, 273 residues long: Formamidopyrimidine-DNA glycosylase (273 aa).

Catalysis depends on proline 2, which acts as the Schiff-base intermediate with DNA. The Proton donor role is filled by glutamate 3. Catalysis depends on lysine 57, which acts as the Proton donor; for beta-elimination activity. Residues histidine 90, arginine 109, and lysine 150 each contribute to the DNA site. Residues 235–269 (KVYGRAGKECPVCSSKIEEEKIGQRNSFWCGKCQF) form an FPG-type zinc finger. Arginine 259 (proton donor; for delta-elimination activity) is an active-site residue.

It belongs to the FPG family. In terms of assembly, monomer. Zn(2+) is required as a cofactor.

It carries out the reaction Hydrolysis of DNA containing ring-opened 7-methylguanine residues, releasing 2,6-diamino-4-hydroxy-5-(N-methyl)formamidopyrimidine.. The catalysed reaction is 2'-deoxyribonucleotide-(2'-deoxyribose 5'-phosphate)-2'-deoxyribonucleotide-DNA = a 3'-end 2'-deoxyribonucleotide-(2,3-dehydro-2,3-deoxyribose 5'-phosphate)-DNA + a 5'-end 5'-phospho-2'-deoxyribonucleoside-DNA + H(+). Functionally, involved in base excision repair of DNA damaged by oxidation or by mutagenic agents. Acts as a DNA glycosylase that recognizes and removes damaged bases. Has a preference for oxidized purines, such as 7,8-dihydro-8-oxoguanine (8-oxoG). Has AP (apurinic/apyrimidinic) lyase activity and introduces nicks in the DNA strand. Cleaves the DNA backbone by beta-delta elimination to generate a single-strand break at the site of the removed base with both 3'- and 5'-phosphates. This chain is Formamidopyrimidine-DNA glycosylase, found in Aliivibrio fischeri (strain MJ11) (Vibrio fischeri).